Reading from the N-terminus, the 176-residue chain is Protein GrpE (176 aa).

Residues Met1–Glu28 form a disordered region.

Belongs to the GrpE family. Homodimer.

The protein localises to the cytoplasm. Its function is as follows. Participates actively in the response to hyperosmotic and heat shock by preventing the aggregation of stress-denatured proteins, in association with DnaK and GrpE. It is the nucleotide exchange factor for DnaK and may function as a thermosensor. Unfolded proteins bind initially to DnaJ; upon interaction with the DnaJ-bound protein, DnaK hydrolyzes its bound ATP, resulting in the formation of a stable complex. GrpE releases ADP from DnaK; ATP binding to DnaK triggers the release of the substrate protein, thus completing the reaction cycle. Several rounds of ATP-dependent interactions between DnaJ, DnaK and GrpE are required for fully efficient folding. The polypeptide is Protein GrpE (Campylobacter jejuni subsp. jejuni serotype O:2 (strain ATCC 700819 / NCTC 11168)).